Here is a 175-residue protein sequence, read N- to C-terminus: FOXL2 neighbor protein (175 aa).

Disordered regions lie at residues 1-39 (MTRT…PALV) and 70-100 (AQKT…GKRR).

This is FOXL2 neighbor protein (FOXL2NB) from Homo sapiens (Human).